A 430-amino-acid chain; its full sequence is Enolase (430 aa).

Gln163 is a (2R)-2-phosphoglycerate binding site. Glu205 functions as the Proton donor in the catalytic mechanism. Positions 242, 285, and 312 each coordinate Mg(2+). Positions 337, 366, 367, and 388 each coordinate (2R)-2-phosphoglycerate. Lys337 functions as the Proton acceptor in the catalytic mechanism.

This sequence belongs to the enolase family. Mg(2+) is required as a cofactor.

Its subcellular location is the cytoplasm. It localises to the secreted. The protein resides in the cell surface. It catalyses the reaction (2R)-2-phosphoglycerate = phosphoenolpyruvate + H2O. The protein operates within carbohydrate degradation; glycolysis; pyruvate from D-glyceraldehyde 3-phosphate: step 4/5. Its function is as follows. Catalyzes the reversible conversion of 2-phosphoglycerate (2-PG) into phosphoenolpyruvate (PEP). It is essential for the degradation of carbohydrates via glycolysis. In Rubrobacter xylanophilus (strain DSM 9941 / JCM 11954 / NBRC 16129 / PRD-1), this protein is Enolase.